Consider the following 274-residue polypeptide: Penicillin-insensitive murein endopeptidase (274 aa).

A signal peptide spans 1 to 19; the sequence is MNKTAIALLALLASSASLA. 3 disulfides stabilise this stretch: C44–C265, C187–C235, and C216–C223. Zn(2+)-binding residues include H110, H113, D120, D147, H150, and H211. The tract at residues 227 to 274 is disordered; sequence PLPPPGDGCGAELQSWFEPPKPGTTKPEKKTPPPLPPSCQALLDEHVI.

It belongs to the peptidase M74 family. As to quaternary structure, dimer. Requires Zn(2+) as cofactor.

It is found in the periplasm. Murein endopeptidase that cleaves the D-alanyl-meso-2,6-diamino-pimelyl amide bond that connects peptidoglycan strands. Likely plays a role in the removal of murein from the sacculus. This chain is Penicillin-insensitive murein endopeptidase, found in Escherichia coli O6:K15:H31 (strain 536 / UPEC).